Here is a 426-residue protein sequence, read N- to C-terminus: Serine hydroxymethyltransferase (426 aa).

(6S)-5,6,7,8-tetrahydrofolate contacts are provided by residues Leu115 and 119–121 (GHI). Lys225 carries the post-translational modification N6-(pyridoxal phosphate)lysine.

This sequence belongs to the SHMT family. In terms of assembly, homodimer. It depends on pyridoxal 5'-phosphate as a cofactor.

It is found in the cytoplasm. It functions in the pathway amino-acid biosynthesis; glycine biosynthesis; glycine from L-serine: step 1/1. In terms of biological role, catalyzes the reversible interconversion of serine and glycine with a modified folate serving as the one-carbon carrier. Also exhibits a pteridine-independent aldolase activity toward beta-hydroxyamino acids, producing glycine and aldehydes, via a retro-aldol mechanism. This is Serine hydroxymethyltransferase from Thermoplasma volcanium (strain ATCC 51530 / DSM 4299 / JCM 9571 / NBRC 15438 / GSS1).